A 400-amino-acid chain; its full sequence is Iron(III) enterobactin esterase (400 aa).

Belongs to the Fes family.

The protein resides in the cytoplasm. It catalyses the reaction Fe(III)-enterobactin + 3 H2O + H(+) = Fe(III)-[N-(2,3-dihydroxybenzoyl)-L-serine] + 2 N-(2,3-dihydroxybenzoyl)-L-serine. The catalysed reaction is Fe(III)-enterobactin + H2O = Fe(III)-[N-(2,3-dihydroxybenzoyl)-L-serine]3 + H(+). The enzyme catalyses Fe(III)-[N-(2,3-dihydroxybenzoyl)-L-serine]3 + H2O + H(+) = Fe(III)-[N-(2,3-dihydroxybenzoyl)-L-serine]2 + N-(2,3-dihydroxybenzoyl)-L-serine. It carries out the reaction Fe(III)-[N-(2,3-dihydroxybenzoyl)-L-serine]2 + H2O + H(+) = Fe(III)-[N-(2,3-dihydroxybenzoyl)-L-serine] + N-(2,3-dihydroxybenzoyl)-L-serine. It catalyses the reaction enterobactin + 3 H2O = 3 N-(2,3-dihydroxybenzoyl)-L-serine + 2 H(+). Functionally, catalyzes the hydrolysis of ferric enterobactin (Fe-Ent). Is responsible for the release of iron from ferric enterobactin. Also catalyzes the hydrolysis of iron-free enterobactin (Ent). Hydrolyzes ferric monoglucosyl-C-Ent (Fe-MGE) poorly and does not hydrolyze ferric diglucosyl-C-Ent (Fe-DGE) or ferric triglucosyl-C-Ent (Fe-TGE) at all. Also hydrolyzes apo MGE, but catalyzes the hydrolysis of apo DGE very poorly, and does not process apo TGE at all. The catalytic efficiency for processing Fe-Ent is much higher than that for apo Ent, suggesting that Fe-Ent is the physiological substrate. The chain is Iron(III) enterobactin esterase from Escherichia coli O6:H1 (strain CFT073 / ATCC 700928 / UPEC).